We begin with the raw amino-acid sequence, 300 residues long: Protein YIF1B-B (300 aa).

Residues 1–46 (MNQESSFRAPPKRRVRGSNPNISNPHQLFDDTSGGPVPHGGDFPNH) are disordered. Over 1-142 (MNQESSFRAP…APRFDINAPD (142 aa)) the chain is Cytoplasmic. The helical transmembrane segment at 143–163 (LYIPVMAFITYILVAGLALGT) threads the bilayer. The Extracellular segment spans residues 164–178 (QSRFSPEILGMQASS). The helical transmembrane segment at 179-199 (ALAWLIVEVLAILLSLYLVTV) threads the bilayer. Topologically, residues 200–205 (NTDLTT) are cytoplasmic. A helical transmembrane segment spans residues 206–226 (VDLVAFSGYKYVGMISGVIAG). A topological domain (extracellular) is located at residue L227. Residues 228-248 (LFGNTGYYVVLAWCCISIVFF) traverse the membrane as a helical segment. Residues 249–278 (MIRTLRLKILSEAAAEGVLVRGARNQLRMY) are Cytoplasmic-facing. A helical transmembrane segment spans residues 279–299 (LTMAIAAVQPIFMYWLTYHLV). Residue R300 is a topological domain, extracellular.

This sequence belongs to the YIF1 family.

Its subcellular location is the endoplasmic reticulum membrane. It localises to the golgi apparatus membrane. It is found in the endoplasmic reticulum-Golgi intermediate compartment membrane. In terms of biological role, functions in endoplasmic reticulum to Golgi vesicle-mediated transport and regulates the proper organization of the endoplasmic reticulum and the Golgi. Plays a key role in targeting to neuronal dendrites receptors such as HTR1A. Plays also a role in primary cilium and sperm flagellum assembly probably through protein transport to these compartments. In Xenopus laevis (African clawed frog), this protein is Protein YIF1B-B (yif1b-b).